We begin with the raw amino-acid sequence, 475 residues long: 1-aminocyclopropane-1-carboxylate synthase CMA101 (475 aa).

Lys-272 carries the N6-(pyridoxal phosphate)lysine modification.

The protein belongs to the class-I pyridoxal-phosphate-dependent aminotransferase family. Homodimer. It depends on pyridoxal 5'-phosphate as a cofactor.

The catalysed reaction is S-adenosyl-L-methionine = 1-aminocyclopropane-1-carboxylate + S-methyl-5'-thioadenosine + H(+). Its pathway is alkene biosynthesis; ethylene biosynthesis via S-adenosyl-L-methionine; ethylene from S-adenosyl-L-methionine: step 1/2. Catalyzes the formation of 1-aminocyclopropane-1-carboxylate, a direct precursor of ethylene in higher plants. This Cucurbita maxima (Pumpkin) protein is 1-aminocyclopropane-1-carboxylate synthase CMA101 (ACS2).